A 374-amino-acid chain; its full sequence is Alginate lyase (374 aa).

The N-terminal stretch at 1 to 26 (MRNPKLKNLLAPTLLSLAMFAGATQA) is a signal peptide. Residues 67 to 68 (SK), 140 to 141 (HT), and Tyr258 contribute to the substrate site.

This sequence belongs to the polysaccharide lyase 5 family.

It localises to the periplasm. It carries out the reaction Eliminative cleavage of alginate to give oligosaccharides with 4-deoxy-alpha-L-erythro-hex-4-enuronosyl groups at their non-reducing ends and beta-D-mannuronate at their reducing end.. In terms of biological role, catalyzes the depolymerization of alginate by cleaving the beta-1,4 glycosidic bond between two adjacent sugar residues via a beta-elimination mechanism. May serve to degrade mislocalized alginate that is trapped in the periplasmic space. The polypeptide is Alginate lyase (Cobetia marina (Deleya marina)).